The chain runs to 2297 residues: Serine/threonine-protein kinase WNK2 (2297 aa).

Residues M1–V10 show a composition bias toward basic and acidic residues. Disordered regions lie at residues M1–V75 and A89–L183. Omega-N-methylarginine occurs at positions 19 and 30. Position 45 is a phosphoserine (S45). The span at R92 to G120 shows a compositional bias: low complexity. Residues G142 to E172 show a composition bias toward basic and acidic residues. Residues P173–D182 show a composition bias toward acidic residues. The region spanning L195–F453 is the Protein kinase domain. ATP is bound by residues S205, T275–M278, and K325. The Proton acceptor role is filled by D342. Phosphoserine; by autocatalysis is present on residues S352 and S356. S560 carries the phosphoserine modification. 8 disordered regions span residues A579–S630, F699–P751, P917–Q1022, P1117–S1185, S1262–N1297, A1323–G1345, S1374–P1480, and P1492–I1586. Over residues P604–Y625 the composition is skewed to polar residues. Composition is skewed to pro residues over residues V709–L740 and P939–P1007. S1150 is subject to Phosphoserine. Residues A1167–R1178 are compositionally biased toward basic residues. A Phosphoserine modification is found at S1262. A compositionally biased stretch (polar residues) spans S1392–S1406. Residues S1411–P1426 are compositionally biased toward pro residues. Polar residues-rich tracts occupy residues A1439–Q1453 and Q1461–L1473. Positions E1510 to S1520 are enriched in pro residues. Over residues P1526–V1544 the composition is skewed to low complexity. Positions P1552–P1565 are enriched in pro residues. At S1588 the chain carries Phosphoserine. Residues T1621–R1631 show a composition bias toward basic and acidic residues. A disordered region spans residues T1621–V1865. Positions Q1675–R1688 are enriched in polar residues. S1685 bears the Phosphoserine mark. The span at A1721 to G1731 shows a compositional bias: basic and acidic residues. Residues S1736, S1817, S1818, S1862, and S1889 each carry the phosphoserine modification. Disordered stretches follow at residues N1970–K1990 and T2011–V2031. Positions G1981 to K1990 are enriched in basic residues. S2067 is subject to Phosphoserine. 2 disordered regions span residues S2123–L2142 and C2269–S2297. Residues H2272–F2289 are compositionally biased toward polar residues.

The protein belongs to the protein kinase superfamily. Ser/Thr protein kinase family. WNK subfamily. As to quaternary structure, forms a complex with the phosphorylated form of STK39. Requires Mg(2+) as cofactor. Post-translationally, autophosphorylated. Autophosphorylation at Ser-352 and Ser-356 promotes its activity. In terms of tissue distribution, expressed in various cancer cell lines (at protein level). Predominantly expressed in heart, brain, skeletal muscle and colon.

It is found in the cytoplasm. The protein localises to the cell membrane. The catalysed reaction is L-seryl-[protein] + ATP = O-phospho-L-seryl-[protein] + ADP + H(+). The enzyme catalyses L-threonyl-[protein] + ATP = O-phospho-L-threonyl-[protein] + ADP + H(+). With respect to regulation, activation requires autophosphorylation of Ser-356 and, to a lower extent, Ser-352. In terms of biological role, serine/threonine-protein kinase component of the WNK2-SPAK/OSR1 kinase cascade, which plays an important role in the regulation of electrolyte homeostasis, cell signaling, survival, and proliferation. The WNK2-SPAK/OSR1 kinase cascade is composed of WNK2, which mediates phosphorylation and activation of downstream kinases OXSR1/OSR1 and STK39/SPAK. Following activation, OXSR1/OSR1 and STK39/SPAK catalyze phosphorylation of ion cotransporters, regulating their activity. Acts as an activator and inhibitor of sodium-coupled chloride cotransporters and potassium-coupled chloride cotransporters respectively. Activates SLC12A2, SCNN1A, SCNN1B, SCNN1D and SGK1 and inhibits SLC12A5. Negatively regulates the EGF-induced activation of the ERK/MAPK-pathway and the downstream cell cycle progression. Affects MAPK3/MAPK1 activity by modulating the activity of MAP2K1 and this modulation depends on phosphorylation of MAP2K1 by PAK1. WNK2 acts by interfering with the activity of PAK1 by controlling the balance of the activity of upstream regulators of PAK1 activity, RHOA and RAC1, which display reciprocal activity. This Homo sapiens (Human) protein is Serine/threonine-protein kinase WNK2.